The primary structure comprises 85 residues: Putative sodium channel toxin Ts37 (85 aa).

Positions 1–20 (MAGEWACLLVSLVLLWGAAG) are cleaved as a signal peptide. The LCN-type CS-alpha/beta domain occupies 22–83 (RDGFLLDRNF…KIWGDSVRCR (62 aa)). Cystine bridges form between Cys32-Cys82, Cys36-Cys59, Cys45-Cys64, and Cys49-Cys66.

Belongs to the long (4 C-C) scorpion toxin superfamily. Sodium channel inhibitor family. Expressed by the venom gland.

The protein resides in the secreted. Putative sodium channel toxin. The protein is Putative sodium channel toxin Ts37 of Tityus serrulatus (Brazilian scorpion).